A 282-amino-acid polypeptide reads, in one-letter code: Bifunctional protein FolD (282 aa).

NADP(+) is bound by residues 164–166 and Ser189; that span reads GRS.

This sequence belongs to the tetrahydrofolate dehydrogenase/cyclohydrolase family. In terms of assembly, homodimer.

It catalyses the reaction (6R)-5,10-methylene-5,6,7,8-tetrahydrofolate + NADP(+) = (6R)-5,10-methenyltetrahydrofolate + NADPH. The catalysed reaction is (6R)-5,10-methenyltetrahydrofolate + H2O = (6R)-10-formyltetrahydrofolate + H(+). The protein operates within one-carbon metabolism; tetrahydrofolate interconversion. Its function is as follows. Catalyzes the oxidation of 5,10-methylenetetrahydrofolate to 5,10-methenyltetrahydrofolate and then the hydrolysis of 5,10-methenyltetrahydrofolate to 10-formyltetrahydrofolate. In Lactobacillus gasseri (strain ATCC 33323 / DSM 20243 / BCRC 14619 / CIP 102991 / JCM 1131 / KCTC 3163 / NCIMB 11718 / NCTC 13722 / AM63), this protein is Bifunctional protein FolD.